Here is a 231-residue protein sequence, read N- to C-terminus: MNKRLIKLIFIVCSTVIVTGVLYKYINQNYPKFFKESQNIVSFYALLLLLFSIIYSTFSRKEIRRFCFQLAMWAVIFLVIITGYAFRFELHYAYHRVISALIPSYKWSTEVGEIIIARSGDGHFYINACVNNVKIKFMVDTGASDIALTKEDAQKLGFDLNKLKYTRTYLTANGENKAAPIILNSVVIGTEFKNIKGHVGLGNLDISLLGMSLLERFKGFRIDKDLLILNY.

Transmembrane regions (helical) follow at residues 6-26 (IKLI…YKYI), 39-59 (NIVS…STFS), and 66-86 (FCFQ…GYAF).

It is found in the cell membrane. This is an uncharacterized protein from Rickettsia prowazekii (strain Madrid E).